The sequence spans 268 residues: Microtubule-associated protein RP/EB family member 1 (268 aa).

Ala2 is subject to N-acetylalanine. The Calponin-homology (CH) domain maps to 14–116 (NLSRHDMLAW…FVQWFKKFFD (103 aa)). N6-crotonyllysine is present on Lys66. Phosphotyrosine is present on Tyr124. The tract at residues 124-268 (YDPVAARQGQ…GGPQEEQEEY (145 aa)) is interaction with MTUS2/TIP150. The segment at 146–191 (LSKPKKPLGSGSAAPQRPIATQRTTAAPKAGPGMVRKNPGMGNGDD) is disordered. Ser155 bears the Phosphoserine mark. The 71-residue stretch at 185–255 (GMGNGDDEAA…LYATDEGFVI (71 aa)) folds into the EB1 C-terminal domain. Positions 206–211 (TVEDLE) are interaction with APC. The DCTN1-binding stretch occupies residues 208 to 268 (EDLEKERDFY…GGPQEEQEEY (61 aa)). Position 220 is an N6-acetyllysine (Lys220). The interval 220–242 (KLRNIELICQENEGENDPVLQRI) is APC-binding. Residues 232–255 (EGENDPVLQRIVDILYATDEGFVI) are interaction with SKA1.

This sequence belongs to the MAPRE family. In terms of assembly, homodimer. Heterodimer with MAPRE3. Interacts with DCTN1, DCTN2, TERF1 and dynein intermediate chain. Interaction with DIAPH1 and DIAPH2. Interacts (via C-terminal residues 206-211) with APC (via C-terminal residues 2674-2845); the interaction inhibits association with and bundling of F-actin. Interacts with CLASP2, DST, KIF2C and STIM1; probably required for their targeting to the growing microtubule plus ends. Interacts with MTUS2; interaction is direct and probably targets MTUS2 to microtubules. Interacts (via C-terminus) with SKA1 (via SXIP motif); the interaction is direct and stabilizes the kinetochore-microtubule attachment of the SKA1 complex. Interacts with APC2. Interacts with CLASP1. Interacts with CDK5RAP2. According to another report, MAPRE1 does not interact with CDK5RAP2. Interacts with MACF1. Interacts with RABL2/RABL2A; binds preferentially to GTP-bound RABL2. Interacts with KCNAB2. Interacts (via C-terminus) with CLIP1. Interacts with SLAIN2 and SLAIN1. Interacts with KIF18B; this interaction is required for efficient accumulation of KIF18B at microtubule plus ends. Interacts with MISP. Interacts with KNSTRN. Interacts with NCKAP5L. Interacts with AKAP9. Interacts with PDE4DIP; this interaction, which is PDE4DIP isoform-specific, is required for its recruitment to the Golgi apparatus. Interacts with CAMSAP2. May form a pericentrosomal complex with AKAP9, CDK5RAP2 and PDE4DIP isoform 2/MMG8/SMYLE; within this complex, MAPRE1 binding to CDK5RAP2 may be mediated by PDE4DIP. Contrary to other mammalian species, does not interact with CDK5RAP2, possibly due to the lack of conservation of the MAPRE1-binding motif in rat CDK5RAP2. Interacts with AKNA. Interacts with GAS2L1, GAS2L2, and GAS2L3. Interacts with RARRES1 and AGBL2. In terms of processing, acetylation at Lys-220 by KAT2B/PCAF promotes dynamic kinetochore-microtubule interactions in early mitosis. Post-translationally, crotonylated by KAT5 during mitosis, promoting astral microtubule plasticity and dynamic connection between astral microtubules and the cortex during mitotic chromosome segregation, thereby ensuring accurate spindle positioning in mitosis. Decrotonylated by HDAC3.

The protein resides in the cytoplasm. It is found in the cytoskeleton. It localises to the microtubule organizing center. Its subcellular location is the centrosome. The protein localises to the golgi apparatus. The protein resides in the spindle. It is found in the spindle pole. In terms of biological role, plus-end tracking protein (+TIP) that binds to the plus-end of microtubules and regulates the dynamics of the microtubule cytoskeleton. Recruits other +TIP proteins to microtubules by binding to a conserved Ser-X-Leu-Pro (SXLP) motif in their polypeptide chains. Promotes cytoplasmic microtubule nucleation and elongation. Involved in mitotic spindle positioning by stabilizing microtubules and promoting dynamic connection between astral microtubules and the cortex during mitotic chromosome segregation. Assists chromosome alignment in metaphase by recruiting the SKA complex to the spindle and stabilizing its interactions with microtubule bundles (K-fibers). Also acts as a regulator of minus-end microtubule organization: interacts with the complex formed by AKAP9 and PDE4DIP, leading to recruit CAMSAP2 to the Golgi apparatus, thereby tethering non-centrosomal minus-end microtubules to the Golgi, an important step for polarized cell movement. Promotes elongation of CAMSAP2-decorated microtubule stretches on the minus-end of microtubules. Acts as a regulator of autophagosome transport via interaction with CAMSAP2. Functions downstream of Rho GTPases and DIAPH1 in stable microtubule formation. May play a role in cell migration. The chain is Microtubule-associated protein RP/EB family member 1 (Mapre1) from Rattus norvegicus (Rat).